The sequence spans 298 residues: DNA-binding transcriptional activator HetR (298 aa).

S152 is a catalytic residue.

It belongs to the peptidase S48 family. As to quaternary structure, homodimer; disulfide-linked.

Controls heterocyst differentiation. Dimerization is required for DNA-binding. Has both a protease and a DNA-binding activity. This is DNA-binding transcriptional activator HetR from Nostoc sp. (strain PCC 9229).